Reading from the N-terminus, the 179-residue chain is Interferon lambda-4 (179 aa).

Residues 1 to 21 (MRPSVWAAVAAGLWVLCTVIA) form the signal peptide. A disordered region spans residues 130 to 149 (SSRKVPGAQKRRHKPRRADS).

It belongs to the lambda interferon family.

The protein resides in the cytoplasm. The protein localises to the secreted. Its function is as follows. Cytokine that may trigger an antiviral response activating the JAK-STAT pathway and up-regulating specifically some interferon-stimulated genes. The protein is Interferon lambda-4 (IFNL4) of Homo sapiens (Human).